The primary structure comprises 518 residues: Ribonuclease Y (518 aa).

Residues 2-22 (GSIIISALLALVIGAVVGFFV) form a helical membrane-spanning segment. A KH domain is found at 208-271 (TVSVVNLPND…ETARIALDKL (64 aa)). One can recognise an HD domain in the interval 334–427 (VLKHSVEVAF…VAAADALSAA (94 aa)).

The protein belongs to the RNase Y family.

Its subcellular location is the cell membrane. Functionally, endoribonuclease that initiates mRNA decay. The protein is Ribonuclease Y of Geobacillus kaustophilus (strain HTA426).